Here is a 292-residue protein sequence, read N- to C-terminus: Pantothenate synthetase (292 aa).

An ATP-binding site is contributed by 32–39; the sequence is MGFLHEGH. The active-site Proton donor is the histidine 39. Residue glutamine 63 participates in (R)-pantoate binding. Glutamine 63 is a beta-alanine binding site. ATP is bound at residue 150-153; sequence GEKD. Glutamine 156 contacts (R)-pantoate. ATP-binding positions include valine 179 and 187-190; that span reads MSSR.

This sequence belongs to the pantothenate synthetase family. As to quaternary structure, homodimer.

The protein localises to the cytoplasm. It carries out the reaction (R)-pantoate + beta-alanine + ATP = (R)-pantothenate + AMP + diphosphate + H(+). It participates in cofactor biosynthesis; (R)-pantothenate biosynthesis; (R)-pantothenate from (R)-pantoate and beta-alanine: step 1/1. Catalyzes the condensation of pantoate with beta-alanine in an ATP-dependent reaction via a pantoyl-adenylate intermediate. This chain is Pantothenate synthetase, found in Myxococcus xanthus (strain DK1622).